Here is a 391-residue protein sequence, read N- to C-terminus: Small ribosomal subunit protein bS1 (391 aa).

S1 motif domains lie at 16-90 (GDKV…LSRR), 108-173 (NEII…LSRK), 194-262 (GDVI…LSIK), and 279-348 (NDDI…LSIK). The disordered stretch occupies residues 356 to 381 (VVESDPSTTKAYLESEEEDNPTIGDM).

This sequence belongs to the bacterial ribosomal protein bS1 family.

Functionally, binds mRNA; thus facilitating recognition of the initiation point. It is needed to translate mRNA with a short Shine-Dalgarno (SD) purine-rich sequence. This is Small ribosomal subunit protein bS1 (rpsA) from Staphylococcus aureus (strain MRSA252).